A 189-amino-acid chain; its full sequence is MEQIDKQKIADAVKVILEAVGENPEREGLIDTPMRVARMYEEVFAGLKKDPSVHFDTIFEEQHEELVLVKDIRFSSMCEHHLVPFFGVAHVAYLPQNGRVAGLSKLARVVDDVSRRPQLQERITTTVAEIMMEKLKPLGVMVIMEAEHMCMTIRGVNKPGTKTITSAVRGAFKNDDKLRSEVLALIKHN.

Residues C78, H81, and C150 each contribute to the Zn(2+) site.

It belongs to the GTP cyclohydrolase I family. As to quaternary structure, homomer.

It carries out the reaction GTP + H2O = 7,8-dihydroneopterin 3'-triphosphate + formate + H(+). The protein operates within cofactor biosynthesis; 7,8-dihydroneopterin triphosphate biosynthesis; 7,8-dihydroneopterin triphosphate from GTP: step 1/1. This chain is GTP cyclohydrolase 1, found in Listeria monocytogenes serotype 4b (strain CLIP80459).